The sequence spans 503 residues: ATP synthase subunit alpha (503 aa).

Position 170–177 (170–177) interacts with ATP; the sequence is GDKQTGKT.

The protein belongs to the ATPase alpha/beta chains family. As to quaternary structure, F-type ATPases have 2 components, CF(1) - the catalytic core - and CF(0) - the membrane proton channel. CF(1) has five subunits: alpha(3), beta(3), gamma(1), delta(1), epsilon(1). CF(0) has three main subunits: a(1), b(2) and c(9-12). The alpha and beta chains form an alternating ring which encloses part of the gamma chain. CF(1) is attached to CF(0) by a central stalk formed by the gamma and epsilon chains, while a peripheral stalk is formed by the delta and b chains.

The protein localises to the cell inner membrane. The catalysed reaction is ATP + H2O + 4 H(+)(in) = ADP + phosphate + 5 H(+)(out). In terms of biological role, produces ATP from ADP in the presence of a proton gradient across the membrane. The alpha chain is a regulatory subunit. The polypeptide is ATP synthase subunit alpha (Helicobacter pylori (strain J99 / ATCC 700824) (Campylobacter pylori J99)).